The following is a 324-amino-acid chain: NAC domain-containing protein 21/22 (324 aa).

The NAC domain occupies 19–171 (LPPGFRFHPK…DWVLCRVFHK (153 aa)). A Bipartite nuclear localization signal motif is present at residues 120 to 137 (RKTLVFYQGRAPRGRKTD).

In terms of assembly, dimer. Interacts with SINAT5. Post-translationally, ubiquitinated. The interaction with SINAT5 mediate its proteasome-dependent degradation. Predominantly expressed in the root tip and in lateral root initiation sites. Also detected in expanding cotyledon, and in leaf primordia.

Its subcellular location is the nucleus. Transcriptional activator that mediates auxin signaling to promote lateral root development. Activates the expression of two downstream auxin-responsive genes, DBP and AIR3. The chain is NAC domain-containing protein 21/22 (NAC021) from Arabidopsis thaliana (Mouse-ear cress).